Consider the following 862-residue polypeptide: Leucine--tRNA ligase (862 aa).

The 'HIGH' region motif lies at 49 to 59 (PYPSGRIHMGH). A 'KMSKS' region motif is present at residues 625-629 (KMSKS). Lysine 628 provides a ligand contact to ATP.

The protein belongs to the class-I aminoacyl-tRNA synthetase family.

Its subcellular location is the cytoplasm. The catalysed reaction is tRNA(Leu) + L-leucine + ATP = L-leucyl-tRNA(Leu) + AMP + diphosphate. This Paramagnetospirillum magneticum (strain ATCC 700264 / AMB-1) (Magnetospirillum magneticum) protein is Leucine--tRNA ligase.